A 401-amino-acid chain; its full sequence is Zinc finger CCHC domain-containing protein 12 (401 aa).

2 disordered regions span residues 1 to 20 (MASILSRMGNSRGQNSPLPP) and 270 to 292 (DSDEDVILVEPDDPPLPSSSAGP). The span at 270-282 (DSDEDVILVEPDD) shows a compositional bias: acidic residues. The segment at 345–362 (VHCSHCGEEGHSKETCDN) adopts a CCHC-type zinc-finger fold.

Belongs to the ZCCHC12 family. Interacts with SMAD1 and CREB-binding protein (CBP). Forms a protein-DNA complex through its association with SMAD1.

Transcriptional coactivator in the bone morphogenetic protein (BMP)-signaling pathway. It positively modulates BMP signaling by interacting with SMAD1 and associating with CBP in the transcription complex. It contributes to the BMP-induced enhancement of cholinergic-neuron-specific gene expression. The protein is Zinc finger CCHC domain-containing protein 12 (Zcchc12) of Rattus norvegicus (Rat).